The primary structure comprises 194 residues: Putative 3-methyladenine DNA glycosylase (194 aa).

This sequence belongs to the DNA glycosylase MPG family.

This chain is Putative 3-methyladenine DNA glycosylase, found in Synechococcus elongatus (strain ATCC 33912 / PCC 7942 / FACHB-805) (Anacystis nidulans R2).